The primary structure comprises 92 residues: Cell division topological specificity factor (92 aa).

This sequence belongs to the MinE family.

Prevents the cell division inhibition by proteins MinC and MinD at internal division sites while permitting inhibition at polar sites. This ensures cell division at the proper site by restricting the formation of a division septum at the midpoint of the long axis of the cell. This chain is Cell division topological specificity factor, found in Symbiobacterium thermophilum (strain DSM 24528 / JCM 14929 / IAM 14863 / T).